Consider the following 196-residue polypeptide: GTP cyclohydrolase 1 (196 aa).

Cys86, His89, and Cys158 together coordinate Zn(2+).

It belongs to the GTP cyclohydrolase I family. In terms of assembly, homomer.

It carries out the reaction GTP + H2O = 7,8-dihydroneopterin 3'-triphosphate + formate + H(+). Its pathway is cofactor biosynthesis; 7,8-dihydroneopterin triphosphate biosynthesis; 7,8-dihydroneopterin triphosphate from GTP: step 1/1. The chain is GTP cyclohydrolase 1 from Clostridium botulinum (strain Kyoto / Type A2).